The chain runs to 445 residues: MAAQAPVDEIAQLSVSDAATTKPKPGLDSATATNGNLNRDSDDSDDDAENAAPGAETGAAKKKKKRKPKKKKKNPTAQSDPPRVLISQLFPDKVYPKGEEVEYVNENRYRTTNEEKRHLDNLKNDFYNDYRHAAEAHRQTRQWAQKNIKPGWSLTDIANGIEDSVRALVGHQGLEEGDALKAGMGFPTGLSLNHCAAHYNPNAGNKMVLQQDDVLKVDIGVHVNGNIVDSAFTLAFNPRYDPLLEACKAATNEGLKQAGIDARLGEIGGYIQEVMESYEVELDGNTYQVKPIRNLNGHTILPYNIHGGKSVPIVKSNDQTKMEEGDVFAIETFGSTGNGYVHEEGEISHYAKRMDAPKVDLRLSSAKSLLNVINKNFGTLPFCRRYLDRLGQDKYLLGLNSLVANGVVESYPPLVDKKGSYTAQFEHTILIRPTVKEVISRGDDY.

Residues 1–89 are disordered; sequence MAAQAPVDEI…DPPRVLISQL (89 aa). Positions 60–74 are enriched in basic residues; that stretch reads AKKKKKRKPKKKKKN. His198 serves as a coordination point for substrate. Asp218, Asp229, and His298 together coordinate a divalent metal cation. His306 contributes to the substrate binding site. The a divalent metal cation site is built by Glu331 and Glu426.

This sequence belongs to the peptidase M24A family. Methionine aminopeptidase eukaryotic type 2 subfamily. It depends on Co(2+) as a cofactor. Zn(2+) serves as cofactor. Mn(2+) is required as a cofactor. The cofactor is Fe(2+).

The protein localises to the cytoplasm. It catalyses the reaction Release of N-terminal amino acids, preferentially methionine, from peptides and arylamides.. Its function is as follows. Cotranslationally removes the N-terminal methionine from nascent proteins. The N-terminal methionine is often cleaved when the second residue in the primary sequence is small and uncharged (Met-Ala-, Cys, Gly, Pro, Ser, Thr, or Val). This chain is Methionine aminopeptidase 2, found in Podospora anserina (strain S / ATCC MYA-4624 / DSM 980 / FGSC 10383) (Pleurage anserina).